A 60-amino-acid chain; its full sequence is Large ribosomal subunit protein bL32c (60 aa).

This sequence belongs to the bacterial ribosomal protein bL32 family.

The protein resides in the plastid. The protein localises to the chloroplast. In Psilotum nudum (Whisk fern), this protein is Large ribosomal subunit protein bL32c.